The sequence spans 67 residues: MPFVNIRITKDGVTAEQKKQLIAGVTQLLVDTLGKNPATTVVIIDEVETDNWGIGGESVTERRQQAS.

Residue Pro-2 is the Proton acceptor; via imino nitrogen of the active site.

This sequence belongs to the 4-oxalocrotonate tautomerase family.

This chain is Probable tautomerase K2, found in Dickeya dadantii (strain 3937) (Erwinia chrysanthemi (strain 3937)).